The sequence spans 298 residues: MACHNVSELQDLGCSNQLLLQPLWDSIRTGEASARSPFFPVIFSIFTYLGFCLPFVVLDVLCPWVPILRRYKIHPDFSPSVRQLLPCLGLTLYQHLVFVFPVTLMHWARSPALLPREAPELSQLLSHVLICLLLFDTEIFAWHLLHHKVPWLYRTFHKVHHQNSSSFALATQYMSVWELLSLTFFDVLNVAMLQCHPLTILVFHVVNIWLSVEDHSGYDFPWSTHRLVPFGWYGGVAHHDLHHSQFNCNFAPYFTHWDKMLGTLRCAPHSKRLCAGSESCLDSGEQCTVHLNQKKKQT.

N-linked (GlcNAc...) asparagine glycosylation occurs at N5. A run of 3 helical transmembrane segments spans residues 38 to 58, 84 to 104, and 124 to 144; these read FFPV…FVVL, LLPC…PVTL, and LLSH…AWHL. Residues 128–263 enclose the Fatty acid hydroxylase domain; sequence VLICLLLFDT…FTHWDKMLGT (136 aa). Positions 142–146 match the Histidine box-1 motif; sequence WHLLH. The Histidine box-2 motif lies at 157 to 161; that stretch reads HKVHH. N163 carries N-linked (GlcNAc...) asparagine glycosylation. A run of 2 helical transmembrane segments spans residues 167–187 and 190–210; these read FALA…FFDV and VAML…NIWL. The Histidine box-3 signature appears at 238–244; it reads HHDLHHS.

It belongs to the sterol desaturase family. The cofactor is Fe cation. N-glycosylated. In terms of tissue distribution, expressed in testicular macrophages at all stages, with the highest level in 10 day old animals.

The protein resides in the endoplasmic reticulum membrane. It carries out the reaction cholesterol + AH2 + O2 = 25-hydroxycholesterol + A + H2O. The catalysed reaction is cholesterol + NADPH + O2 + H(+) = 25-hydroxycholesterol + NADP(+) + H2O. Its function is as follows. Catalyzes the formation of 25-hydroxycholesterol from cholesterol, leading to repress cholesterol biosynthetic enzymes. Plays a key role in cell positioning and movement in lymphoid tissues: 25-hydroxycholesterol is an intermediate in biosynthesis of 7-alpha,25-dihydroxycholesterol (7-alpha,25-OHC), an oxysterol that acts as a ligand for the G protein-coupled receptor GPR183/EBI2, a chemotactic receptor for a number of lymphoid cells. May play an important role in regulating lipid metabolism by synthesizing a corepressor that blocks sterol regulatory element binding protein (SREBP) processing. In testis, production of 25-hydroxycholesterol by macrophages plays a role in Leydig cell differentiation. Required to restrain inflammation in macrophages: production of 25-hydroxycholesterol protects macrophages from cholesterol overload, thereby preventing mitochondrial DNA release and subsequent activation of the AIM2 inflammasome. Interferon-stimulated gene which has broad antiviral activities against a wide range of enveloped viruses. Functionally, catalyzes the formation of 25-hydroxycholesterol from cholesterol, leading to repress cholesterol biosynthetic enzymes. Plays a key role in cell positioning and movement in lymphoid tissues: 25-hydroxycholesterol is an intermediate in biosynthesis of 7-alpha,25-dihydroxycholesterol (7-alpha,25-OHC), an oxysterol that acts as a ligand for the G protein-coupled receptor GPR183/EBI2, a chemotactic receptor for a number of lymphoid cells. May play an important role in regulating lipid metabolism by synthesizing a corepressor that blocks sterol regulatory element binding protein (SREBP) processing. As an interferon-stimulated gene, has broad antiviral activities against a wide range of enveloped viruses. Its product, 25-hydroxycholesterol, activates the ER-localized enzyme ACAT to induce internalization of accessible cholesterol on the plasma membrane and restricts virus-host membranes fusion which inhibits virus replication. In testis, production of 25-hydroxycholesterol by macrophages plays a role in Leydig cell differentiation. The polypeptide is Cholesterol 25-hydroxylase (Rattus norvegicus (Rat)).